The chain runs to 274 residues: 2,3,4,5-tetrahydropyridine-2,6-dicarboxylate N-succinyltransferase (274 aa).

Positions 104 and 141 each coordinate substrate.

The protein belongs to the transferase hexapeptide repeat family. As to quaternary structure, homotrimer.

The protein localises to the cytoplasm. The catalysed reaction is (S)-2,3,4,5-tetrahydrodipicolinate + succinyl-CoA + H2O = (S)-2-succinylamino-6-oxoheptanedioate + CoA. It participates in amino-acid biosynthesis; L-lysine biosynthesis via DAP pathway; LL-2,6-diaminopimelate from (S)-tetrahydrodipicolinate (succinylase route): step 1/3. The protein is 2,3,4,5-tetrahydropyridine-2,6-dicarboxylate N-succinyltransferase of Shigella boydii serotype 4 (strain Sb227).